The primary structure comprises 573 residues: F-box/WD repeat-containing protein 5 (573 aa).

The F-box domain occupies 3–49 (EGGLPLLPDSLVYQIFLSLGPADVLAAGLVCRQWQAVSRDEFLWKEQ). Residues 90 to 129 (EHTDQVLHLSFSHSGYQFASCSKDCTVKIWNNDLTISLLH) form a WD 1 repeat. Ser-151 is subject to Phosphoserine; by PLK4. The D-box signature appears at 308–316 (RRVFDSVLD). 2 WD repeats span residues 470-509 (TPND…CLAK) and 511-551 (RHED…RVLQ).

The protein belongs to the FBXW5 family. As to quaternary structure, part of the SCF (SKP1-CUL1-F-box) E3 ubiquitin-protein ligase complex SCF(FBXW5) composed of CUL1, SKP1, RBX1 and FBXW5. Component of the DCX(FBXW5) E3 ubiquitin ligase complex, at least composed of (CUL4A or CUL4B), DDB1, FBXW5 and RBX1. Interacts with CDC20, TSC1, TSC2 and SASS6. Interacts with EPS8. Interacts with TNFAIP8L1; TNFAIP8L1 competes with TSC2 to bind FBXW5 increasing TSC2 stability by preventing its ubiquitination. In terms of processing, phosphorylated at Ser-151 by PLK4 during the G1/S transition, leading to inhibit its ability to ubiquitinate SASS6. Ubiquitinated and degraded by the APC/C complex during mitosis and G1 phase. In terms of tissue distribution, widely expressed in adult and embryonal tissues.

The protein resides in the cytoplasm. It participates in protein modification; protein ubiquitination. Its function is as follows. Substrate recognition component of both SCF (SKP1-CUL1-F-box protein) and DCX (DDB1-CUL4-X-box) E3 ubiquitin-protein ligase complexes. Substrate-specific adapter of the DCX(FBXW5) E3 ubiquitin-protein ligase complex which mediates the polyubiquitination and subsequent degradation of TSC2. May also act as a negative regulator of MAP3K7/TAK1 signaling in the interleukin-1B (IL1B) signaling pathway. Substrate recognition component of the SCF(FBXW5) E3 ubiquitin-protein ligase complex which mediates the ubiquitination and subsequent proteasomal degradation of SASS6 during S phase, leading to prevent centriole reduplication. The SCF(FBXW5) complex also mediates ubiquitination and degradation of actin-regulator EPS8 during G2 phase, leading to the transient degradation of EPS8 and subsequent cell shape changes required to allow mitotic progression. This chain is F-box/WD repeat-containing protein 5 (Fbxw5), found in Mus musculus (Mouse).